Reading from the N-terminus, the 388-residue chain is Staphopain A (388 aa).

A signal peptide spans 1 to 25; that stretch reads MKRNFPKLIALSLIFSLSITPIANA. Residues 26–214 constitute a propeptide that is removed on maturation; that stretch reads ESNSNIKAKD…TSQFKSNNYT (189 aa). Catalysis depends on residues cysteine 238, histidine 334, and asparagine 355.

This sequence belongs to the peptidase C47 family. As to quaternary structure, in the cytoplasm, prematurely activated/folded ScpA forms a stable non-covalent complex with ScpB. Cleavage leads to the activation of ScpA probably by an auto-catalytic manner.

Its subcellular location is the secreted. It carries out the reaction Broad endopeptidase action on proteins including elastin, but rather limited hydrolysis of small-molecule substrates. Assays are conveniently made with hemoglobin, casein or Z-Phe-Arg-NHMec as substrate.. With respect to regulation, prematurely activated/folded staphopain A is inhibited by staphostatin A (ScpB), which is probably required to protect staphylococcal cytoplasmic proteins from degradation by ScpA. Its function is as follows. Cysteine protease that plays an important role in the inhibition of host innate immune response. Cleaves host elastins found in connective tissues, pulmonary surfactant protein A in the lungs, and the chemokine receptor CXCR2 on leukocytes. Proteolytic cleavage of surfactant protein A impairs bacterial phagocytosis by neutrophils while CXCR2 degradation blocks neutrophil activation and chemotaxis. Additionally, promotes vascular leakage by activating the plasma kallikerin/kinin system, resulting in hypotension. This is Staphopain A (sspP) from Staphylococcus aureus (strain MRSA252).